A 332-amino-acid chain; its full sequence is Beta-ketoacyl-[acyl-carrier-protein] synthase III (332 aa).

Residues Cys116 and His255 contribute to the active site. The tract at residues 256–260 (QANLR) is ACP-binding. Asn285 is an active-site residue.

Belongs to the thiolase-like superfamily. FabH family. In terms of assembly, homodimer.

Its subcellular location is the cytoplasm. The catalysed reaction is malonyl-[ACP] + acetyl-CoA + H(+) = 3-oxobutanoyl-[ACP] + CO2 + CoA. It functions in the pathway lipid metabolism; fatty acid biosynthesis. Catalyzes the condensation reaction of fatty acid synthesis by the addition to an acyl acceptor of two carbons from malonyl-ACP. Catalyzes the first condensation reaction which initiates fatty acid synthesis and may therefore play a role in governing the total rate of fatty acid production. Possesses both acetoacetyl-ACP synthase and acetyl transacylase activities. Its substrate specificity determines the biosynthesis of branched-chain and/or straight-chain of fatty acids. The polypeptide is Beta-ketoacyl-[acyl-carrier-protein] synthase III (Helicobacter hepaticus (strain ATCC 51449 / 3B1)).